We begin with the raw amino-acid sequence, 184 residues long: Serine recombinase PinE (184 aa).

In terms of domain architecture, Resolvase/invertase-type recombinase catalytic spans 1 to 134 (MLIGYVRVST…AGLETARAQG (134 aa)). The O-(5'-phospho-DNA)-serine intermediate role is filled by Ser-9. Positions 161 to 180 (RQKVAIIYDVGVSTLYKRFP) form a DNA-binding region, H-T-H motif.

Belongs to the site-specific recombinase resolvase family.

Its function is as follows. This protein catalyzes the inversion of an 1800-bp E.coli DNA fragment, the P region, which can exist in either orientation. The function of the inversion is not yet clear. This Escherichia coli (strain K12) protein is Serine recombinase PinE (pinE).